We begin with the raw amino-acid sequence, 146 residues long: Cyanate hydratase (146 aa).

Active-site residues include Arg-87, Glu-90, and Ser-113.

The protein belongs to the cyanase family.

The catalysed reaction is cyanate + hydrogencarbonate + 3 H(+) = NH4(+) + 2 CO2. Its function is as follows. Catalyzes the reaction of cyanate with bicarbonate to produce ammonia and carbon dioxide. The polypeptide is Cyanate hydratase (Pseudomonas putida (strain ATCC 700007 / DSM 6899 / JCM 31910 / BCRC 17059 / LMG 24140 / F1)).